The chain runs to 179 residues: MTIEILRLGHRGERDKRISTHVALTSRALGAKKIIFTEEDKHVKESVERIVDSWGGDFKFEVVKSWRTYTKRFKDNGIVVHLTMYGENINKIMTEIREDISKTNKNLLLIIGAEKVPREAYDLADYNLSVGNQPHSEVAALAIFLDRLTEGKTLYSEYNDAKIKVTPSKSEKCVFVEKD.

S-adenosyl-L-methionine-binding positions include Leu-82, 112-116 (GAEKV), and 130-137 (VGNQPHSE).

It belongs to the aTrm56 family. As to quaternary structure, homodimer.

Its subcellular location is the cytoplasm. The enzyme catalyses cytidine(56) in tRNA + S-adenosyl-L-methionine = 2'-O-methylcytidine(56) in tRNA + S-adenosyl-L-homocysteine + H(+). Functionally, specifically catalyzes the AdoMet-dependent 2'-O-ribose methylation of cytidine at position 56 in tRNAs. The sequence is that of tRNA (cytidine(56)-2'-O)-methyltransferase from Methanococcus maripaludis (strain C6 / ATCC BAA-1332).